The following is a 344-amino-acid chain: Putative esterase NocK (344 aa).

The segment at residues 1-34 is a signal peptide (tat-type signal); it reads MIGVTRRSGLALAVLVSSAACAGAEPVAPPPAPA. The disordered stretch occupies residues 265–295; sequence GGADERRREEARPAAAPGGTSTSRETCANPD. Over residues 266–276 the composition is skewed to basic and acidic residues; it reads GADERRREEAR.

This sequence belongs to the AB hydrolase superfamily. Post-translationally, predicted to be exported by the Tat system. The position of the signal peptide cleavage has not been experimentally proven.

This Nocardia uniformis subsp. tsuyamanensis protein is Putative esterase NocK.